We begin with the raw amino-acid sequence, 439 residues long: Putative porin QuiX (439 aa).

An N-terminal signal peptide occupies residues 1–22 (MRHFFKLGLVSAAVLGSQMTLA).

It belongs to the OprB family.

The protein resides in the cell outer membrane. In terms of biological role, could be involved in the transport of quinate or shikimate. This is Putative porin QuiX (quiX) from Acinetobacter baylyi (strain ATCC 33305 / BD413 / ADP1).